The sequence spans 320 residues: Histidine decarboxylase proenzyme (320 aa).

The propeptide occupies 2 to 11; it reads NKNLEANRNR. A Pyruvic acid (Ser) modification is found at Ser98. Glu215 functions as the Proton donor in the catalytic mechanism.

In terms of assembly, the proenzyme is a hexamer of identical pi chains; each pi chain monomer is cleaved to form a small (or beta) chain and a large (or alpha) chain by non-hydrolytic self-catalysis. Requires pyruvate as cofactor.

It carries out the reaction L-histidine + H(+) = histamine + CO2. The chain is Histidine decarboxylase proenzyme (hdc) from Clostridium perfringens (strain 13 / Type A).